We begin with the raw amino-acid sequence, 354 residues long: Peptide chain release factor 1 (354 aa).

Position 231 is an N5-methylglutamine (glutamine 231). The segment covering 284-304 has biased composition (basic and acidic residues); it reads EALAKDRKEQVGSGDRSERIR. Positions 284-308 are disordered; that stretch reads EALAKDRKEQVGSGDRSERIRTYNF.

Belongs to the prokaryotic/mitochondrial release factor family. Methylated by PrmC. Methylation increases the termination efficiency of RF1.

Its subcellular location is the cytoplasm. Its function is as follows. Peptide chain release factor 1 directs the termination of translation in response to the peptide chain termination codons UAG and UAA. The protein is Peptide chain release factor 1 of Nitratiruptor sp. (strain SB155-2).